Consider the following 153-residue polypeptide: MSKRNNVSYVKPAEPSFISKFKKDVCYKEGPTVDTKRQELPILSEDSDGSDKEDEQPQVVVLRKGDLSEEDVMKIKQQIKENTKDEEAAPSDGKILFKKPVKRLSGDTTSGVNACSTKKKKQEDTKESSGTKSSQKQVKNSSLLSFDDEDYDD.

Disordered stretches follow at residues 30 to 66 (GPTVDTKRQELPILSEDSDGSDKEDEQPQVVVLRKGD) and 79 to 153 (IKEN…DYDD). The span at 45–56 (EDSDGSDKEDEQ) shows a compositional bias: acidic residues. Composition is skewed to polar residues over residues 106 to 116 (GDTTSGVNACS) and 130 to 144 (GTKSSQKQVKNSSLL).

This is an uncharacterized protein from Xenopus laevis (African clawed frog).